We begin with the raw amino-acid sequence, 547 residues long: ATP synthase subunit alpha (547 aa).

Residue 172–179 coordinates ATP; that stretch reads GDRKTGKT.

It belongs to the ATPase alpha/beta chains family. In terms of assembly, F-type ATPases have 2 components, CF(1) - the catalytic core - and CF(0) - the membrane proton channel. CF(1) has five subunits: alpha(3), beta(3), gamma(1), delta(1), epsilon(1). CF(0) has three main subunits: a(1), b(2) and c(9-12). The alpha and beta chains form an alternating ring which encloses part of the gamma chain. CF(1) is attached to CF(0) by a central stalk formed by the gamma and epsilon chains, while a peripheral stalk is formed by the delta and b chains.

Its subcellular location is the cell membrane. It carries out the reaction ATP + H2O + 4 H(+)(in) = ADP + phosphate + 5 H(+)(out). Functionally, produces ATP from ADP in the presence of a proton gradient across the membrane. The alpha chain is a regulatory subunit. This Rhodococcus erythropolis (strain PR4 / NBRC 100887) protein is ATP synthase subunit alpha.